The sequence spans 145 residues: UPF0179 protein MmarC7_0952 (145 aa).

This sequence belongs to the UPF0179 family.

The sequence is that of UPF0179 protein MmarC7_0952 from Methanococcus maripaludis (strain C7 / ATCC BAA-1331).